A 604-amino-acid polypeptide reads, in one-letter code: NADPH oxidase activator (604 aa).

2 TPR repeats span residues 36-69 (SKINYNIGVMYIKSNNFRNAIEYFNRSVEQDKYL) and 71-103 (SSYYMRAIAHHMNGELNHAIVDYDETISKLRGH). Disordered stretches follow at residues 180-298 (FKPP…KLPS) and 383-581 (DIIP…PYQV). 2 stretches are compositionally biased toward low complexity: residues 194–215 (SATTSSIQSSSPSTPMSSSPPS) and 225–243 (PSSSSPSSSSPSLSSSSSP). A compositionally biased stretch (pro residues) spans 244-260 (KLPPTPKPSFGSSPPPS). The span at 261–284 (SSSSSSSSSSSSSSSISPLTNKTL) shows a compositional bias: low complexity. Residues 309-384 (KITLKVFYKD…EINEINVKDI (76 aa)) form the PB1 domain. Low complexity-rich tracts occupy residues 396-424 (PDKTNNSTSSYSSSSSSSSSSSSSSSSSS), 435-453 (PKTTTRPILPPTTTTTTST), and 467-483 (FGSTPSSPSFSSPSSSS). Polar residues predominate over residues 502–528 (LLKQQNQTQSINIPPKVPTSSRPKMTQ). The span at 529 to 570 (SHSPPSSSPLSSYSTSFQSVSSPSLSSSYNGSTSSYGGFSSS) shows a compositional bias: low complexity. The region spanning 573–604 (PPTPYPYQVLYTDSNEKYYLNTETNETFWELP) is the WW domain.

Functionally, may function as an activator of NOX1, a superoxide-producing NADPH oxidase. This is NADPH oxidase activator (ncfA) from Dictyostelium discoideum (Social amoeba).